The sequence spans 792 residues: LPS-assembly protein LptD (792 aa).

An N-terminal signal peptide occupies residues 1 to 22; that stretch reads MYRVLRLLPLPLSVAISLSALA.

It belongs to the LptD family. Component of the lipopolysaccharide transport and assembly complex. Interacts with LptE and LptA.

The protein localises to the cell outer membrane. Together with LptE, is involved in the assembly of lipopolysaccharide (LPS) at the surface of the outer membrane. The chain is LPS-assembly protein LptD from Xylella fastidiosa (strain Temecula1 / ATCC 700964).